Reading from the N-terminus, the 735-residue chain is Alpha-adducin (735 aa).

Met1 is subject to N-acetylmethionine. Residues 1–11 (MNGDTRAAVVT) are compositionally biased toward low complexity. Residues 1–21 (MNGDTRAAVVTSPPPTTAPHK) form a disordered region. A Phosphoserine modification is found at Ser12. At Ser59 the chain carries Phosphoserine; by PKA. Phosphoserine is present on Ser64. Residue Thr331 is modified to Phosphothreonine. Ser334, Ser353, and Ser355 each carry phosphoserine. The residue at position 358 (Thr358) is a Phosphothreonine. 2 positions are modified to phosphoserine: Ser364 and Ser366. The residue at position 408 (Ser408) is a Phosphoserine; by PKA. Disordered stretches follow at residues 418–486 (GHSF…SAVP) and 576–735 (RREV…KSDS). The residue at position 427 (Ser427) is a Phosphoserine. A Phosphothreonine modification is found at Thr429. Position 431 is a phosphoserine (Ser431). Position 436 is a phosphoserine; by PKA (Ser436). Thr445 carries the phosphothreonine; by ROCK2 modification. A phosphoserine mark is found at Ser464 and Ser465. Thr480 carries the post-translational modification Phosphothreonine; by ROCK2. Position 481 is a phosphoserine; by PKA (Ser481). The segment covering 576 to 601 (RREVERKQKGSEENLDETREQKEKSP) has biased composition (basic and acidic residues). A phosphoserine mark is found at Ser586, Ser600, and Ser605. Residue Thr610 is modified to Phosphothreonine. The residue at position 613 (Ser613) is a Phosphoserine. Phosphothreonine is present on Thr614. The span at 678 to 712 (EPASASAPGAEEVASPATEEGSPMDPGSDGSPGKS) shows a compositional bias: low complexity. Ser705, Ser708, and Ser712 each carry phosphoserine. Positions 713–735 (PSKKKKKFRTPSFLKKSKKKSDS) are enriched in basic residues. The residue at position 714 (Ser714) is a Phosphoserine; by PKC. The segment at 715 to 732 (KKKKKFRTPSFLKKSKKK) is interaction with calmodulin. A Phosphoserine; by PKA and PKC modification is found at Ser724.

It belongs to the aldolase class II family. Adducin subfamily. Heterodimer of an alpha and a beta subunit or an alpha and a gamma subunit.

The protein resides in the cytoplasm. Its subcellular location is the cytoskeleton. The protein localises to the cell membrane. Its function is as follows. Membrane-cytoskeleton-associated protein that promotes the assembly of the spectrin-actin network. Binds to calmodulin. The chain is Alpha-adducin (Add1) from Rattus norvegicus (Rat).